The primary structure comprises 384 residues: Spermidine/putrescine import ATP-binding protein PotA (384 aa).

The region spanning Ile26–Ile260 is the ABC transporter domain. Gly62 to Thr69 lines the ATP pocket.

This sequence belongs to the ABC transporter superfamily. Spermidine/putrescine importer (TC 3.A.1.11.1) family. In terms of assembly, the complex is composed of two ATP-binding proteins (PotA), two transmembrane proteins (PotB and PotC) and a solute-binding protein (PotD).

The protein resides in the cell membrane. The enzyme catalyses ATP + H2O + polyamine-[polyamine-binding protein]Side 1 = ADP + phosphate + polyamineSide 2 + [polyamine-binding protein]Side 1.. Part of the ABC transporter complex PotABCD involved in spermidine/putrescine import. Responsible for energy coupling to the transport system. This Thermobifida fusca (strain YX) protein is Spermidine/putrescine import ATP-binding protein PotA.